We begin with the raw amino-acid sequence, 161 residues long: V-type proton ATPase 16 kDa proteolipid subunit c (161 aa).

Residues 1–15 (MSYDLATAERAAYAP) lie on the Lumenal side of the membrane. A helical transmembrane segment spans residues 16-36 (FFGYMGAASAQIFTVLGAAYG). Over 37-58 (TAKSAVGISSMGVMRPELIMKS) the chain is Cytoplasmic. Residues 59–79 (VIPVIMAGIIGIYGLVVAMVL) traverse the membrane as a helical segment. Residues 80-98 (RGKVTSASAGYTLDKGFAH) lie on the Lumenal side of the membrane. The helical transmembrane segment at 99–119 (LAAGLTCGLCGLGAGYAIGIV) threads the bilayer. Residues 120 to 137 (GDAGVRGTAQQPRLFVGM) lie on the Cytoplasmic side of the membrane. The chain crosses the membrane as a helical span at residues 138 to 158 (ILILIFSEVLGLYGMIVALIL). Topologically, residues 159 to 161 (GTS) are lumenal.

The protein belongs to the V-ATPase proteolipid subunit family. V-ATPase is a heteromultimeric enzyme made up of two complexes: the ATP-hydrolytic V1 complex and the proton translocation V0 complex. The V1 complex consists of three catalytic AB heterodimers that form a heterohexamer, three peripheral stalks each consisting of EG heterodimers, one central rotor including subunits D and F, and the regulatory subunits C and H. The proton translocation complex V0 consists of the proton transport subunit a, a ring of proteolipid subunits c9c'', rotary subunit d, subunits e and f, and the accessory subunits vah-19/Ac45 and vah-20/PRR.

It is found in the membrane. In terms of biological role, proton-conducting pore forming subunit of the V0 complex of vacuolar(H+)-ATPase (V-ATPase), a multisubunit enzyme composed of a peripheral complex (V1) that hydrolyzes ATP and a membrane integral complex (V0) that translocates protons. V-ATPase is responsible for acidifying and maintaining the pH of intracellular compartments and in some cell types, is targeted to the plasma membrane, where it is responsible for acidifying the extracellular environment. The chain is V-type proton ATPase 16 kDa proteolipid subunit c (12) from Ascaris suum (Pig roundworm).